The chain runs to 148 residues: Deoxyuridine 5'-triphosphate nucleotidohydrolase (148 aa).

Residues 67–69, Asn-80, 84–86, and Met-94 each bind substrate; these read RSG and LID.

Belongs to the dUTPase family. Mg(2+) is required as a cofactor.

It carries out the reaction dUTP + H2O = dUMP + diphosphate + H(+). Its pathway is pyrimidine metabolism; dUMP biosynthesis; dUMP from dCTP (dUTP route): step 2/2. In terms of biological role, this enzyme is involved in nucleotide metabolism: it produces dUMP, the immediate precursor of thymidine nucleotides and it decreases the intracellular concentration of dUTP so that uracil cannot be incorporated into DNA. This is Deoxyuridine 5'-triphosphate nucleotidohydrolase from Burkholderia cenocepacia (strain ATCC BAA-245 / DSM 16553 / LMG 16656 / NCTC 13227 / J2315 / CF5610) (Burkholderia cepacia (strain J2315)).